A 498-amino-acid chain; its full sequence is ATP synthase subunit beta, chloroplastic (498 aa).

172–179 contacts ATP; sequence GGAGVGKT.

The protein belongs to the ATPase alpha/beta chains family. F-type ATPases have 2 components, CF(1) - the catalytic core - and CF(0) - the membrane proton channel. CF(1) has five subunits: alpha(3), beta(3), gamma(1), delta(1), epsilon(1). CF(0) has four main subunits: a(1), b(1), b'(1) and c(9-12).

Its subcellular location is the plastid. It is found in the chloroplast thylakoid membrane. It carries out the reaction ATP + H2O + 4 H(+)(in) = ADP + phosphate + 5 H(+)(out). Produces ATP from ADP in the presence of a proton gradient across the membrane. The catalytic sites are hosted primarily by the beta subunits. This is ATP synthase subunit beta, chloroplastic from Trochodendron aralioides (Wheel tree).